A 406-amino-acid polypeptide reads, in one-letter code: Coenzyme A biosynthesis bifunctional protein CoaBC (406 aa).

Residues 2 to 190 are phosphopantothenoylcysteine decarboxylase; that stretch reads SLAGKKIVLG…SPVNDLKHLN (189 aa). C158 acts as the Proton donor in catalysis. The tract at residues 191-406 is phosphopantothenate--cysteine ligase; sequence IMITAGPTRE…VTRYDEKNRR (216 aa). CTP-binding positions include 273-275, D279, K289, 308-311, F327, K341, and K345; these read GCA and PDIV.

In the N-terminal section; belongs to the HFCD (homo-oligomeric flavin containing Cys decarboxylase) superfamily. It in the C-terminal section; belongs to the PPC synthetase family. Mg(2+) serves as cofactor. Requires FMN as cofactor.

It catalyses the reaction N-[(R)-4-phosphopantothenoyl]-L-cysteine + H(+) = (R)-4'-phosphopantetheine + CO2. The catalysed reaction is (R)-4'-phosphopantothenate + L-cysteine + CTP = N-[(R)-4-phosphopantothenoyl]-L-cysteine + CMP + diphosphate + H(+). Its pathway is cofactor biosynthesis; coenzyme A biosynthesis; CoA from (R)-pantothenate: step 2/5. The protein operates within cofactor biosynthesis; coenzyme A biosynthesis; CoA from (R)-pantothenate: step 3/5. Functionally, catalyzes two sequential steps in the biosynthesis of coenzyme A. In the first step cysteine is conjugated to 4'-phosphopantothenate to form 4-phosphopantothenoylcysteine. In the second step the latter compound is decarboxylated to form 4'-phosphopantotheine. The protein is Coenzyme A biosynthesis bifunctional protein CoaBC of Escherichia coli O6:H1 (strain CFT073 / ATCC 700928 / UPEC).